A 449-amino-acid polypeptide reads, in one-letter code: UDP-N-acetylmuramoylalanine--D-glutamate ligase (449 aa).

Position 113–119 (113–119 (GTNGKTT)) interacts with ATP.

Belongs to the MurCDEF family.

Its subcellular location is the cytoplasm. The enzyme catalyses UDP-N-acetyl-alpha-D-muramoyl-L-alanine + D-glutamate + ATP = UDP-N-acetyl-alpha-D-muramoyl-L-alanyl-D-glutamate + ADP + phosphate + H(+). It participates in cell wall biogenesis; peptidoglycan biosynthesis. In terms of biological role, cell wall formation. Catalyzes the addition of glutamate to the nucleotide precursor UDP-N-acetylmuramoyl-L-alanine (UMA). This Microcystis aeruginosa (strain NIES-843 / IAM M-2473) protein is UDP-N-acetylmuramoylalanine--D-glutamate ligase.